Consider the following 314-residue polypeptide: Lipoyl synthase (314 aa).

Residues Cys55, Cys60, Cys66, Cys81, Cys85, Cys88, and Ser292 each coordinate [4Fe-4S] cluster. A Radical SAM core domain is found at 67-281 (WEDREATFLI…SAYAEGLGFA (215 aa)).

It belongs to the radical SAM superfamily. Lipoyl synthase family. [4Fe-4S] cluster serves as cofactor.

Its subcellular location is the cytoplasm. The catalysed reaction is [[Fe-S] cluster scaffold protein carrying a second [4Fe-4S](2+) cluster] + N(6)-octanoyl-L-lysyl-[protein] + 2 oxidized [2Fe-2S]-[ferredoxin] + 2 S-adenosyl-L-methionine + 4 H(+) = [[Fe-S] cluster scaffold protein] + N(6)-[(R)-dihydrolipoyl]-L-lysyl-[protein] + 4 Fe(3+) + 2 hydrogen sulfide + 2 5'-deoxyadenosine + 2 L-methionine + 2 reduced [2Fe-2S]-[ferredoxin]. The protein operates within protein modification; protein lipoylation via endogenous pathway; protein N(6)-(lipoyl)lysine from octanoyl-[acyl-carrier-protein]: step 2/2. Functionally, catalyzes the radical-mediated insertion of two sulfur atoms into the C-6 and C-8 positions of the octanoyl moiety bound to the lipoyl domains of lipoate-dependent enzymes, thereby converting the octanoylated domains into lipoylated derivatives. The polypeptide is Lipoyl synthase (Mycolicibacterium smegmatis (strain ATCC 700084 / mc(2)155) (Mycobacterium smegmatis)).